The chain runs to 490 residues: Cyclin-T1-3 (490 aa).

Disordered regions lie at residues Arg275 to Ala391 and Ala414 to Ser490. Composition is skewed to polar residues over residues Gln282–Ala298 and Thr352–Met365. 2 stretches are compositionally biased toward basic and acidic residues: residues Ala367–Ala391 and Gln457–Ser490.

Belongs to the cyclin family. Cyclin T subfamily.

The sequence is that of Cyclin-T1-3 (CYCT1-3) from Oryza sativa subsp. japonica (Rice).